We begin with the raw amino-acid sequence, 503 residues long: Cytochrome P450 3A14 (503 aa).

C442 contacts heme.

The protein belongs to the cytochrome P450 family. Heme serves as cofactor.

The protein resides in the endoplasmic reticulum membrane. The protein localises to the microsome membrane. It catalyses the reaction an organic molecule + reduced [NADPH--hemoprotein reductase] + O2 = an alcohol + oxidized [NADPH--hemoprotein reductase] + H2O + H(+). Its function is as follows. Cytochromes P450 are a group of heme-thiolate monooxygenases. In liver microsomes, this enzyme is involved in an NADPH-dependent electron transport pathway. It oxidizes a variety of structurally unrelated compounds, including steroids, fatty acids, and xenobiotics. This chain is Cytochrome P450 3A14 (CYP3A14), found in Cavia porcellus (Guinea pig).